A 482-amino-acid polypeptide reads, in one-letter code: tRNA sulfurtransferase (482 aa).

The region spanning 61–165 (DVTLAVLTQT…NDKLNLIIAR (105 aa)) is the THUMP domain. ATP-binding positions include 183-184 (LI), K265, G287, and Q296. C344 and C456 are disulfide-bonded. A Rhodanese domain is found at 404–482 (LGSDVVVLDI…GYKNVKVYRP (79 aa)). The Cysteine persulfide intermediate role is filled by C456.

It belongs to the ThiI family.

Its subcellular location is the cytoplasm. It carries out the reaction [ThiI sulfur-carrier protein]-S-sulfanyl-L-cysteine + a uridine in tRNA + 2 reduced [2Fe-2S]-[ferredoxin] + ATP + H(+) = [ThiI sulfur-carrier protein]-L-cysteine + a 4-thiouridine in tRNA + 2 oxidized [2Fe-2S]-[ferredoxin] + AMP + diphosphate. It catalyses the reaction [ThiS sulfur-carrier protein]-C-terminal Gly-Gly-AMP + S-sulfanyl-L-cysteinyl-[cysteine desulfurase] + AH2 = [ThiS sulfur-carrier protein]-C-terminal-Gly-aminoethanethioate + L-cysteinyl-[cysteine desulfurase] + A + AMP + 2 H(+). The protein operates within cofactor biosynthesis; thiamine diphosphate biosynthesis. In terms of biological role, catalyzes the ATP-dependent transfer of a sulfur to tRNA to produce 4-thiouridine in position 8 of tRNAs, which functions as a near-UV photosensor. Also catalyzes the transfer of sulfur to the sulfur carrier protein ThiS, forming ThiS-thiocarboxylate. This is a step in the synthesis of thiazole, in the thiamine biosynthesis pathway. The sulfur is donated as persulfide by IscS. This chain is tRNA sulfurtransferase, found in Aliivibrio fischeri (strain ATCC 700601 / ES114) (Vibrio fischeri).